We begin with the raw amino-acid sequence, 471 residues long: Putative multidrug resistance protein MdtD (471 aa).

The Periplasmic segment spans residues 1-11 (MTDLPDSTRWQ). Residues 12 to 32 (LWIVAFGFFMQSLDTTIVNTA) traverse the membrane as a helical segment. At 33–48 (LPSMAQSLGESPLHMH) the chain is on the cytoplasmic side. The helical transmembrane segment at 49 to 69 (MVIVSYVLTVAVMLPASGWLA) threads the bilayer. Residues 70–76 (DKVGVRN) are Periplasmic-facing. Residues 77-97 (IFFTAIVLFTLGSLFCALSGT) form a helical membrane-spanning segment. At 98-101 (LNEL) the chain is on the cytoplasmic side. The chain crosses the membrane as a helical span at residues 102–124 (LLARALQGVGGAMMVPVGRLTVM). The Periplasmic segment spans residues 125–137 (KIVPREQYMAAMT). The helical transmembrane segment at 138–158 (FVTLPGQVGPLLGPALGGLLV) threads the bilayer. At 159-164 (EYASWH) the chain is on the cytoplasmic side. The helical transmembrane segment at 165-185 (WIFLINIPVGIIGAIATLMLM) threads the bilayer. Residues 186-196 (PNYTMQTRRFD) lie on the Periplasmic side of the membrane. The helical transmembrane segment at 197–217 (LSGFLLLAVGMAVLTLALDGS) threads the bilayer. The Cytoplasmic segment spans residues 218–224 (KGTGFSP). Residues 225-245 (LAIAGLVAVGVVALVLYLLHA) traverse the membrane as a helical segment. Over 246-262 (QNNNRALFSLKLFRTRN) the chain is Periplasmic. The helical transmembrane segment at 263 to 283 (FSLGLAGSFAGRIGSGMLPFM) threads the bilayer. Residues 284 to 285 (TP) are Cytoplasmic-facing. A helical membrane pass occupies residues 286–306 (VFLQIGLGFSPFHAGLMMIPM). Topologically, residues 307–341 (VLGSMGMKRIVVQVVNRFGYRRVLVATTLGLSLVT) are periplasmic. The helical transmembrane segment at 342–362 (LLFMTTALLGWYYVLPFVLFL) threads the bilayer. At 363 to 395 (QGMVNSTRFSSMNTLTLKDLPDNLASSGNSLLS) the chain is on the cytoplasmic side. The helical transmembrane segment at 396–416 (MIMQLSMSIGVTIAGLLLGLF) threads the bilayer. At 417–430 (GSQHVSVDSGTTQT) the chain is on the periplasmic side. Residues 431–451 (VFMYTWLSMAFIIALPAFVFA) form a helical membrane-spanning segment. Residues 452–471 (RVPSDTHQNVAISRRKRSAQ) are Cytoplasmic-facing.

This sequence belongs to the major facilitator superfamily. TCR/Tet family.

It is found in the cell inner membrane. This Escherichia coli O1:K1 / APEC protein is Putative multidrug resistance protein MdtD.